Here is a 417-residue protein sequence, read N- to C-terminus: Serine hydroxymethyltransferase (417 aa).

(6S)-5,6,7,8-tetrahydrofolate is bound by residues L121 and 125-127 (GHL). K229 carries the post-translational modification N6-(pyridoxal phosphate)lysine. 355 to 357 (SPF) is a binding site for (6S)-5,6,7,8-tetrahydrofolate.

It belongs to the SHMT family. In terms of assembly, homodimer. The cofactor is pyridoxal 5'-phosphate.

Its subcellular location is the cytoplasm. It catalyses the reaction (6R)-5,10-methylene-5,6,7,8-tetrahydrofolate + glycine + H2O = (6S)-5,6,7,8-tetrahydrofolate + L-serine. It functions in the pathway one-carbon metabolism; tetrahydrofolate interconversion. It participates in amino-acid biosynthesis; glycine biosynthesis; glycine from L-serine: step 1/1. Catalyzes the reversible interconversion of serine and glycine with tetrahydrofolate (THF) serving as the one-carbon carrier. This reaction serves as the major source of one-carbon groups required for the biosynthesis of purines, thymidylate, methionine, and other important biomolecules. Also exhibits THF-independent aldolase activity toward beta-hydroxyamino acids, producing glycine and aldehydes, via a retro-aldol mechanism. In Shewanella baltica (strain OS155 / ATCC BAA-1091), this protein is Serine hydroxymethyltransferase.